The sequence spans 381 residues: E3 ubiquitin-protein ligase KCMF1 (381 aa).

The segment at 4 to 60 (HEGVSCDACLKGNFRGRRYKCLICYDYDLCASCYESGATTTRHTTDHPMQCILTRVD) adopts a ZZ-type zinc-finger fold. Zn(2+) contacts are provided by C9, C12, C24, C27, C33, C36, H46, and H50. The segment at 78-101 (FTCPYCGKMGYTETSLQEHVTSEH) adopts a C2H2-type zinc-finger fold. Disordered stretches follow at residues 154-193 (MFHPGRGLGGPRARRTNMHFTSSSTGGLSSSQSSYSPSNR) and 241-286 (AQAA…QQSI). Positions 175-191 (SSSTGGLSSSQSSYSPS) are enriched in low complexity. Residues 223–261 (SASQLQQLQMQLQLERQQAQAARQQLETARNATRRNNAS) are a coiled coil.

The protein belongs to the KCMF1 family. As to quaternary structure, component of the SIFI complex, composed of kcmf1, ubr4 and calmodulin.

It localises to the cytoplasm. It is found in the late endosome. The protein resides in the lysosome. It carries out the reaction S-ubiquitinyl-[E2 ubiquitin-conjugating enzyme]-L-cysteine + [acceptor protein]-L-lysine = [E2 ubiquitin-conjugating enzyme]-L-cysteine + N(6)-ubiquitinyl-[acceptor protein]-L-lysine.. It functions in the pathway protein modification; protein ubiquitination. Its function is as follows. E3 ubiquitin-protein ligase which accepts ubiquitin from an E2 ubiquitin-conjugating enzyme and then transfers it to targeted substrates, promoting their degradation by the proteasome. Together with UBR4, component of the N-end rule pathway: ubiquitinates proteins bearing specific N-terminal residues that are destabilizing according to the N-end rule, leading to their degradation. Does not ubiquitinate proteins that are acetylated at the N-terminus. Together with ubr4, part of a protein quality control pathway that catalyzes ubiquitination and degradation of proteins that have been oxidized in response to reactive oxygen species (ROS): recognizes proteins with an Arg-CysO3(H) degron at the N-terminus, and mediates assembly of heterotypic 'Lys-63'-/'Lys-27'-linked branched ubiquitin chains on oxidized proteins, leading to their degradation by autophagy. Catalytic component of the SIFI complex, a multiprotein complex required to inhibit the mitochondrial stress response after a specific stress event has been resolved: ubiquitinates and degrades (1) components of the HRI-mediated signaling of the integrated stress response, such as dele1 and eif2ak1/hri, as well as (2) unimported mitochondrial precursors. Within the SIFI complex, ubr4 initiates ubiquitin chain that are further elongated or branched by kcmf1. This Xenopus laevis (African clawed frog) protein is E3 ubiquitin-protein ligase KCMF1 (kcmf1).